The following is a 141-amino-acid chain: Large ribosomal subunit protein uL22 (141 aa).

The segment at 110 to 141 (EEKKTVAKKTTTTKAPAKKTTSTKKATVKKES) is disordered. Over residues 117-134 (KKTTTTKAPAKKTTSTKK) the composition is skewed to low complexity.

The protein belongs to the universal ribosomal protein uL22 family. Part of the 50S ribosomal subunit.

Its function is as follows. This protein binds specifically to 23S rRNA; its binding is stimulated by other ribosomal proteins, e.g. L4, L17, and L20. It is important during the early stages of 50S assembly. It makes multiple contacts with different domains of the 23S rRNA in the assembled 50S subunit and ribosome. The globular domain of the protein is located near the polypeptide exit tunnel on the outside of the subunit, while an extended beta-hairpin is found that lines the wall of the exit tunnel in the center of the 70S ribosome. This is Large ribosomal subunit protein uL22 from Campylobacter jejuni (strain RM1221).